The chain runs to 63 residues: Large ribosomal subunit protein bL28 (63 aa).

Belongs to the bacterial ribosomal protein bL28 family.

The chain is Large ribosomal subunit protein bL28 from Dictyoglomus thermophilum (strain ATCC 35947 / DSM 3960 / H-6-12).